We begin with the raw amino-acid sequence, 105 residues long: Thiosulfate sulfurtransferase GlpE (105 aa).

Residues 15-103 form the Rhodanese domain; the sequence is MQQGAILVDI…WCRAELPIDT (89 aa). Catalysis depends on Cys-63, which acts as the Cysteine persulfide intermediate.

This sequence belongs to the GlpE family.

It localises to the cytoplasm. The enzyme catalyses thiosulfate + hydrogen cyanide = thiocyanate + sulfite + 2 H(+). It carries out the reaction thiosulfate + [thioredoxin]-dithiol = [thioredoxin]-disulfide + hydrogen sulfide + sulfite + 2 H(+). Its function is as follows. Transferase that catalyzes the transfer of sulfur from thiosulfate to thiophilic acceptors such as cyanide or dithiols. May function in a CysM-independent thiosulfate assimilation pathway by catalyzing the conversion of thiosulfate to sulfite, which can then be used for L-cysteine biosynthesis. This chain is Thiosulfate sulfurtransferase GlpE, found in Haemophilus influenzae (strain PittEE).